Consider the following 438-residue polypeptide: Protein c-ets-1-A (438 aa).

The PNT domain maps to 49–134 (ATFSRFTKEQ…EHLEILQKDS (86 aa)). The interval 128–240 (EILQKDSKQY…DNMCLGRISR (113 aa)) is activation domain; required for transcription activation. The tract at residues 301 to 309 (FKDYVRDRA) is helix HI-1. The helix HI-2 stretch occupies residues 320-327 (AAALAGYT). The ETS DNA-binding region spans 332 to 412 (IQLWQFLLEL…AGKRYVYRFV (81 aa)). The segment at 415-419 (LQSLL) is helix H4. Residues 423–429 (PEELHAM) are helix H5.

This sequence belongs to the ETS family. As to quaternary structure, binds DNA as a homodimer; homodimerization is required for transcription activation.

It is found in the nucleus. Its subcellular location is the cytoplasm. Autoinhibited by a module composed of four alpha helices (HI-1, HI-2, H4, and H5) that flank the DNA-binding ETS domain, reducing the affinity for DNA. Transcription factor. Directly controls the expression of cytokine and chemokine genes in a wide variety of different cellular contexts. The polypeptide is Protein c-ets-1-A (ets1-a) (Xenopus laevis (African clawed frog)).